We begin with the raw amino-acid sequence, 268 residues long: 4-hydroxy-tetrahydrodipicolinate reductase (268 aa).

NAD(+) contacts are provided by residues 8 to 13 and glutamate 34; that span reads GAAGRM. Arginine 35 is an NADP(+) binding site. NAD(+) contacts are provided by residues 96–98 and 120–123; these read GST and SPNM. Histidine 153 acts as the Proton donor/acceptor in catalysis. Histidine 154 lines the (S)-2,3,4,5-tetrahydrodipicolinate pocket. Residue lysine 157 is the Proton donor of the active site. 163–164 lines the (S)-2,3,4,5-tetrahydrodipicolinate pocket; sequence GT.

It belongs to the DapB family.

The protein resides in the cytoplasm. The catalysed reaction is (S)-2,3,4,5-tetrahydrodipicolinate + NAD(+) + H2O = (2S,4S)-4-hydroxy-2,3,4,5-tetrahydrodipicolinate + NADH + H(+). It carries out the reaction (S)-2,3,4,5-tetrahydrodipicolinate + NADP(+) + H2O = (2S,4S)-4-hydroxy-2,3,4,5-tetrahydrodipicolinate + NADPH + H(+). It participates in amino-acid biosynthesis; L-lysine biosynthesis via DAP pathway; (S)-tetrahydrodipicolinate from L-aspartate: step 4/4. Catalyzes the conversion of 4-hydroxy-tetrahydrodipicolinate (HTPA) to tetrahydrodipicolinate. In Anaeromyxobacter sp. (strain Fw109-5), this protein is 4-hydroxy-tetrahydrodipicolinate reductase.